We begin with the raw amino-acid sequence, 40 residues long: Alpha-conotoxin-like Qc1.1c (40 aa).

Residues 1 to 19 constitute a propeptide that is removed on maturation; sequence SDGRNTAANDKASNLMALR. Intrachain disulfides connect C22/C28 and C23/C36. Residues 24–26 are lacks the Ser-Xaa-Pro motif that is crucial for potent interaction with nAChR; that stretch reads PNP.

It belongs to the conotoxin A superfamily. Expressed by the venom duct.

Its subcellular location is the secreted. Alpha-conotoxins act on postsynaptic membranes, they bind to the nicotinic acetylcholine receptors (nAChR) and thus inhibit them. Has possibly a distinct nAChR binding mode from other alpha-conotoxins, due to a different three residue motif (lacks the Ser-Xaa-Pro motif). This chain is Alpha-conotoxin-like Qc1.1c, found in Conus quercinus (Oak cone).